Consider the following 468-residue polypeptide: 6-phospho-beta-galactosidase (468 aa).

D-galactose 6-phosphate-binding residues include glutamine 19, histidine 116, asparagine 159, glutamate 160, and asparagine 297. The active-site Proton donor is glutamate 160. Residue glutamate 375 is the Nucleophile of the active site. D-galactose 6-phosphate-binding residues include serine 428, tryptophan 429, lysine 435, and tyrosine 437.

The protein belongs to the glycosyl hydrolase 1 family.

It catalyses the reaction a 6-phospho-beta-D-galactoside + H2O = D-galactose 6-phosphate + an alcohol. It functions in the pathway carbohydrate metabolism; lactose degradation; D-galactose 6-phosphate and beta-D-glucose from lactose 6-phosphate: step 1/1. The sequence is that of 6-phospho-beta-galactosidase from Streptococcus gordonii (strain Challis / ATCC 35105 / BCRC 15272 / CH1 / DL1 / V288).